A 581-amino-acid polypeptide reads, in one-letter code: Guanine nucleotide-binding protein-like 3 homolog (581 aa).

Basic residues predominate over residues 1–49 (MALKRLKTKKSKRLTGRLKHKIEKKVRDHNKKERRAAKKNPKKGSKKQK). Positions 1-50 (MALKRLKTKKSKRLTGRLKHKIEKKVRDHNKKERRAAKKNPKKGSKKQKL) are disordered. Residues 64 to 108 (LKEVEEAKQRQEAERLARREAFKAEREQNKFKTLESMVEDADMRS) are a coiled coil. S99 carries the post-translational modification Phosphoserine. In terms of domain architecture, CP-type G spans 141 to 325 (FKEFRKVIEN…LIDCPGIVFT (185 aa)). Residues 189–192 (NKAD), 274–281 (GIPNVGKS), and 318–321 (DCPG) each bind GTP. A compositionally biased stretch (basic and acidic residues) spans 500–517 (KPAKGRKRKLDEEKEKVD). The tract at residues 500-519 (KPAKGRKRKLDEEKEKVDPS) is disordered.

The protein belongs to the TRAFAC class YlqF/YawG GTPase family.

It localises to the nucleus. The protein resides in the nucleolus. In terms of biological role, may play a role in regulating cellular proliferation. In Drosophila melanogaster (Fruit fly), this protein is Guanine nucleotide-binding protein-like 3 homolog (Ns1).